Here is a 248-residue protein sequence, read N- to C-terminus: 5'-nucleotidase SurE (248 aa).

4 residues coordinate a divalent metal cation: D8, D9, S39, and N91.

It belongs to the SurE nucleotidase family. A divalent metal cation serves as cofactor.

Its subcellular location is the cytoplasm. The catalysed reaction is a ribonucleoside 5'-phosphate + H2O = a ribonucleoside + phosphate. Functionally, nucleotidase that shows phosphatase activity on nucleoside 5'-monophosphates. This Citrifermentans bemidjiense (strain ATCC BAA-1014 / DSM 16622 / JCM 12645 / Bem) (Geobacter bemidjiensis) protein is 5'-nucleotidase SurE.